Reading from the N-terminus, the 308-residue chain is Ferrochelatase (308 aa).

Fe cation-binding residues include His167 and Glu239.

This sequence belongs to the ferrochelatase family.

It is found in the cytoplasm. It carries out the reaction heme b + 2 H(+) = protoporphyrin IX + Fe(2+). It functions in the pathway porphyrin-containing compound metabolism; protoheme biosynthesis; protoheme from protoporphyrin-IX: step 1/1. In terms of biological role, catalyzes the ferrous insertion into protoporphyrin IX. This chain is Ferrochelatase, found in Thermoplasma acidophilum (strain ATCC 25905 / DSM 1728 / JCM 9062 / NBRC 15155 / AMRC-C165).